We begin with the raw amino-acid sequence, 262 residues long: Acyl-[acyl-carrier-protein]--UDP-N-acetylglucosamine O-acyltransferase (262 aa).

The protein belongs to the transferase hexapeptide repeat family. LpxA subfamily. Homotrimer.

The protein localises to the cytoplasm. The enzyme catalyses a (3R)-hydroxyacyl-[ACP] + UDP-N-acetyl-alpha-D-glucosamine = a UDP-3-O-[(3R)-3-hydroxyacyl]-N-acetyl-alpha-D-glucosamine + holo-[ACP]. It functions in the pathway glycolipid biosynthesis; lipid IV(A) biosynthesis; lipid IV(A) from (3R)-3-hydroxytetradecanoyl-[acyl-carrier-protein] and UDP-N-acetyl-alpha-D-glucosamine: step 1/6. In terms of biological role, involved in the biosynthesis of lipid A, a phosphorylated glycolipid that anchors the lipopolysaccharide to the outer membrane of the cell. The sequence is that of Acyl-[acyl-carrier-protein]--UDP-N-acetylglucosamine O-acyltransferase from Burkholderia mallei (strain NCTC 10247).